Reading from the N-terminus, the 85-residue chain is Toxin TdNa9 (85 aa).

Residues 1 to 21 (MLKFAIAVALLLFIGLELREA) form the signal peptide. One can recognise an LCN-type CS-alpha/beta domain in the interval 22 to 84 (RDGYPQSKVN…YGDPGTKPCM (63 aa)). Intrachain disulfides connect cysteine 33-cysteine 83, cysteine 37-cysteine 58, cysteine 43-cysteine 63, and cysteine 47-cysteine 65.

It belongs to the long (4 C-C) scorpion toxin superfamily. Sodium channel inhibitor family. Beta subfamily. In terms of tissue distribution, expressed by the venom gland.

The protein localises to the secreted. Alpha toxins bind voltage-independently at site-3 of sodium channels (Nav) and inhibit the inactivation of the activated channels, thereby blocking neuronal transmission. This toxin binds, in vitro, to sodium channels and inhibits the inactivation of the activated channels. Seems not toxic to mice, crickets and sweet-water shrimps. The chain is Toxin TdNa9 from Tityus discrepans (Venezuelan scorpion).